Reading from the N-terminus, the 234-residue chain is uncharacterized protein (234 aa).

Disordered regions lie at residues 1-65 (MTSV…RRGP) and 182-234 (ARGA…GRKT).

This is an uncharacterized protein from Homo sapiens (Human).